Consider the following 55-residue polypeptide: Large ribosomal subunit protein bL33 (55 aa).

The segment covering 1-11 (MAKGGREKIKL) has biased composition (basic and acidic residues). The interval 1-27 (MAKGGREKIKLESTAGTGHFYTTSKNK) is disordered. A compositionally biased stretch (polar residues) spans 14 to 24 (TAGTGHFYTTS).

It belongs to the bacterial ribosomal protein bL33 family.

The chain is Large ribosomal subunit protein bL33 from Dechloromonas aromatica (strain RCB).